The sequence spans 131 residues: Small ribosomal subunit protein uS8 (131 aa).

Belongs to the universal ribosomal protein uS8 family. In terms of assembly, part of the 30S ribosomal subunit. Contacts proteins S5 and S12.

Functionally, one of the primary rRNA binding proteins, it binds directly to 16S rRNA central domain where it helps coordinate assembly of the platform of the 30S subunit. This chain is Small ribosomal subunit protein uS8, found in Ruminiclostridium cellulolyticum (strain ATCC 35319 / DSM 5812 / JCM 6584 / H10) (Clostridium cellulolyticum).